We begin with the raw amino-acid sequence, 103 residues long: Small ribosomal subunit protein uS10 (103 aa).

It belongs to the universal ribosomal protein uS10 family. Part of the 30S ribosomal subunit.

Involved in the binding of tRNA to the ribosomes. This chain is Small ribosomal subunit protein uS10, found in Tolumonas auensis (strain DSM 9187 / NBRC 110442 / TA 4).